A 160-amino-acid chain; its full sequence is Cyclic pyranopterin monophosphate synthase (160 aa).

Substrate-binding positions include 74–76 and 112–113; these read LSH and ME. Asp-127 is an active-site residue.

It belongs to the MoaC family. As to quaternary structure, homohexamer; trimer of dimers.

It catalyses the reaction (8S)-3',8-cyclo-7,8-dihydroguanosine 5'-triphosphate = cyclic pyranopterin phosphate + diphosphate. Its pathway is cofactor biosynthesis; molybdopterin biosynthesis. Functionally, catalyzes the conversion of (8S)-3',8-cyclo-7,8-dihydroguanosine 5'-triphosphate to cyclic pyranopterin monophosphate (cPMP). This chain is Cyclic pyranopterin monophosphate synthase, found in Geobacter sulfurreducens (strain ATCC 51573 / DSM 12127 / PCA).